The primary structure comprises 529 residues: MSSRLEREAARRRTFAIISHPDAGKTTLTEKLLLFGGAIQMAGSVKARKAARHATSDWMAMERERGISVTTSVMQFPYRDRVVNLLDTPGHQDFSEDTYRVLTAVDSALVVIDAAKGVEAQTRKLMDVCRMRATPVMTFVNKMDREALHPLDVMADIEQHLQIECAPMTWPIGMGSSFKGTYDLLHKQLHLFSATHGGRIQSGIVIHGADDPQLDEYLGDQAEQLRMDLALLEEAGTPFDEERYLKGELTPVFFGSAINNFGVREMLDMFVEFAPGPQPRPAATRVVEPGEEAFTGVVFKIQANMDKAHRDRMAFLRICSGTFTRGMRLKHHRTGKDVTVANATIFMAQDRTGVEEAFPGDIIGIPNHGTIKIGDTFTESKEVLKFVGIPNFAPEHFRRVRLKNPLKAKQLQKGLEQLAEEGAVQLFRPLVNNDYILGAVGVLQFDVIVARLADEYGVDAVYEGVSTHTARWVYCEDKKIFADFQDYHRGELAVDAEGALAYLAPNPWRLESAMERYPKVEFRTTREIS.

In terms of domain architecture, tr-type G spans 10-278 (ARRRTFAIIS…MFVEFAPGPQ (269 aa)). Residues 19–26 (SHPDAGKT), 87–91 (DTPGH), and 141–144 (NKMD) contribute to the GTP site.

The protein belongs to the TRAFAC class translation factor GTPase superfamily. Classic translation factor GTPase family. PrfC subfamily.

The protein localises to the cytoplasm. Functionally, increases the formation of ribosomal termination complexes and stimulates activities of RF-1 and RF-2. It binds guanine nucleotides and has strong preference for UGA stop codons. It may interact directly with the ribosome. The stimulation of RF-1 and RF-2 is significantly reduced by GTP and GDP, but not by GMP. The polypeptide is Peptide chain release factor 3 (Nitratidesulfovibrio vulgaris (strain DSM 19637 / Miyazaki F) (Desulfovibrio vulgaris)).